Consider the following 231-residue polypeptide: NADH-ubiquinone oxidoreductase chain 4 (231 aa).

6 helical membrane passes run 1–21, 34–54, 63–85, 89–111, 128–148, and 156–176; these read PIAG…YGII, MFLP…LTCL, IAYS…TPWG, AMAL…NTTY, ILPM…ATPP, and LLIM…LGLS.

It belongs to the complex I subunit 4 family.

Its subcellular location is the mitochondrion membrane. The catalysed reaction is a ubiquinone + NADH + 5 H(+)(in) = a ubiquinol + NAD(+) + 4 H(+)(out). Its function is as follows. Core subunit of the mitochondrial membrane respiratory chain NADH dehydrogenase (Complex I) that is believed to belong to the minimal assembly required for catalysis. Complex I functions in the transfer of electrons from NADH to the respiratory chain. The immediate electron acceptor for the enzyme is believed to be ubiquinone. The sequence is that of NADH-ubiquinone oxidoreductase chain 4 (MT-ND4) from Trimeresurus stejnegeri (Chinese green tree viper).